Consider the following 3507-residue polypeptide: Dynein axonemal heavy chain 14 (3507 aa).

The disordered stretch occupies residues 91–126 (PHLPGTQDPLRRVRDPTPIVASSPGRRRGSWSGGYG). Residues 354–381 (DEFCEEQLQQATQALKQLEDIRNKAISE) adopt a coiled-coil conformation. The GPAGTGKT motif signature appears at 1164-1171 (GPAGTGKT). ATP contacts are provided by residues 1164–1171 (GPAGTGKT) and 1427–1434 (GPTGGGKT). A glycan (N-linked (GlcNAc...) asparagine) is linked at Asn1818.

This sequence belongs to the dynein heavy chain family. As to quaternary structure, consists of at least two heavy chains and a number of intermediate and light chains.

The protein resides in the cytoplasm. Its subcellular location is the cytoskeleton. The protein localises to the cilium axoneme. Its function is as follows. Force generating protein of respiratory cilia. Produces force towards the minus ends of microtubules. Dynein has ATPase activity; the force-producing power stroke is thought to occur on release of ADP. Involved in sperm motility; implicated in sperm flagellar assembly. This is Dynein axonemal heavy chain 14 (DNAH14) from Homo sapiens (Human).